The chain runs to 245 residues: Ribonuclease 3 (245 aa).

One can recognise an RNase III domain in the interval 19–148 (FRAFQQKLGI…FIGALYLDQG (130 aa)). Residue Glu-61 coordinates Mg(2+). Residue Asp-65 is part of the active site. The Mg(2+) site is built by Asp-134 and Glu-137. Glu-137 is a catalytic residue. A DRBM domain is found at 174–243 (DYKSQLQELI…AAEALRKLKE (70 aa)).

The protein belongs to the ribonuclease III family. Homodimer. Mg(2+) serves as cofactor.

The protein resides in the cytoplasm. It carries out the reaction Endonucleolytic cleavage to 5'-phosphomonoester.. Functionally, digests double-stranded RNA. Involved in the processing of primary rRNA transcript to yield the immediate precursors to the large and small rRNAs (23S and 16S). Processes some mRNAs, and tRNAs when they are encoded in the rRNA operon. Processes pre-crRNA and tracrRNA of type II CRISPR loci if present in the organism. In Bacillus cytotoxicus (strain DSM 22905 / CIP 110041 / 391-98 / NVH 391-98), this protein is Ribonuclease 3.